The chain runs to 242 residues: Biosynthetic peptidoglycan transglycosylase (242 aa).

Residues 19-39 traverse the membrane as a helical segment; it reads ILAALAVFWGGGIALFSVVPV.

This sequence belongs to the glycosyltransferase 51 family.

It is found in the cell inner membrane. The catalysed reaction is [GlcNAc-(1-&gt;4)-Mur2Ac(oyl-L-Ala-gamma-D-Glu-L-Lys-D-Ala-D-Ala)](n)-di-trans,octa-cis-undecaprenyl diphosphate + beta-D-GlcNAc-(1-&gt;4)-Mur2Ac(oyl-L-Ala-gamma-D-Glu-L-Lys-D-Ala-D-Ala)-di-trans,octa-cis-undecaprenyl diphosphate = [GlcNAc-(1-&gt;4)-Mur2Ac(oyl-L-Ala-gamma-D-Glu-L-Lys-D-Ala-D-Ala)](n+1)-di-trans,octa-cis-undecaprenyl diphosphate + di-trans,octa-cis-undecaprenyl diphosphate + H(+). It functions in the pathway cell wall biogenesis; peptidoglycan biosynthesis. Its function is as follows. Peptidoglycan polymerase that catalyzes glycan chain elongation from lipid-linked precursors. This Salmonella heidelberg (strain SL476) protein is Biosynthetic peptidoglycan transglycosylase.